The sequence spans 122 residues: Fluoride-specific ion channel FluC (122 aa).

The next 4 membrane-spanning stretches (helical) occupy residues 6–26 (LVVGFGGFIGAILRMLSINLV), 33–53 (SISFGTLFVNVLGSFIIGLLF), 60–80 (GLSPLLKSFISTGFLGAFTTF), and 101–121 (LNIILNVFLCLFAAWLGFLIF). Na(+)-binding residues include G75 and T78.

Belongs to the fluoride channel Fluc/FEX (TC 1.A.43) family.

It is found in the cell inner membrane. It carries out the reaction fluoride(in) = fluoride(out). Na(+) is not transported, but it plays an essential structural role and its presence is essential for fluoride channel function. Functionally, fluoride-specific ion channel. Important for reducing fluoride concentration in the cell, thus reducing its toxicity. The polypeptide is Fluoride-specific ion channel FluC (Campylobacter jejuni subsp. jejuni serotype O:2 (strain ATCC 700819 / NCTC 11168)).